A 412-amino-acid chain; its full sequence is POU domain, class 4, transcription factor 2 (412 aa).

A disordered region spans residues 29 to 96 (LHSASPGSSA…SEAMRRACLP (68 aa)). Low complexity predominate over residues 31-53 (SASPGSSAPAAPSASSPSSSSNA). Gly residues-rich tracts occupy residues 54–70 (GSGG…GGGR) and 78–87 (GSGGGGGGGS). Residues 94-240 (CLPTPPSNIF…MHQAALSMAH (147 aa)) are required for transcriptional activation. Residues 113-122 (RAEALAAVDI) carry the POU-IV box motif. The tract at residues 123–191 (VSQSKSHHHH…HHHHQPHQAL (69 aa)) is disordered. Over residues 127-138 (KSHHHHPPHHSP) the composition is skewed to basic residues. A compositionally biased stretch (low complexity) spans 152–169 (PCTSAASSSSVPISHPSA). The segment covering 173-187 (THHHHHHHHHHHHQP) has biased composition (basic residues). Residues 174-188 (HHHHHHHHHHHHQPH) carry the Nuclear speckle targeting signal motif. Residues 241–412 (AHGLPSHMGC…QKRMKYSAGI (172 aa)) form a required for DNA-binding and transcriptional repression region. The region spanning 253 to 330 (DVDADPRDLE…ILQAWLEEAE (78 aa)) is the POU-specific domain. Positions 348 to 407 (KKRKRTSIAAPEKRSLEAYFAIQPRPSSEKIAAIAEKLDLKKNVVRVWFCNQRQKQKRMK) form a DNA-binding region, homeobox.

The protein belongs to the POU transcription factor family. Class-4 subfamily. In terms of assembly, interacts with POU4F1; this interaction inhibits both POU4F1 DNA-binding and transcriptional activities. Interacts (C-terminus) with ESR1 (via DNA-binding domain); this interaction increases the estrogen receptor ESR1 transcriptional activity in a DNA- and ligand 17-beta-estradiol-independent manner. Interacts (via C-terminus) with TP53 (via N-terminus). Interacts with DLX1 (via homeobox DNA-binding domain); this interaction suppresses DLX1-mediated transcriptional activity in postnatal retina enhancing retinal ganglion cell (RGC) differentiation. Interacts with DLX2 (via homeobox DNA-binding domain); this interaction enhances RGC differentiation. Interacts (via C-terminus) with ISL1 (via C-terminus). Interacts with ISL2. Interacts with LHX2. In terms of tissue distribution, expressed in the heart, brain and spinal cord. Expressed in cardiomyocytes (at protein level). Expressed in brain and spinal cord. Expressed in dorsal root ganglion (RGD) neurons.

The protein resides in the nucleus. The protein localises to the nucleus speckle. It is found in the cytoplasm. Its function is as follows. Tissue-specific DNA-binding transcription factor involved in the development and differentiation of target cells. Functions either as activator or repressor modulating the rate of target gene transcription through RNA polymerase II enzyme in a promoter-dependent manner. Binds to the consensus octamer motif 5'-AT[A/T]A[T/A]T[A/T]A-3' of promoter of target genes. Plays a fundamental role in the gene regulatory network essential for retinal ganglion cell (RGC) differentiation. Binds to an octamer site to form a ternary complex with ISL1; cooperates positively with ISL1 and ISL2 to potentiate transcriptional activation of RGC target genes being involved in RGC fate commitment in the developing retina and RGC axon formation and pathfinding. Inhibits DLX1 and DLX2 transcriptional activities preventing DLX1- and DLX2-mediated ability to promote amacrine cell fate specification. In cooperation with TP53 potentiates transcriptional activation of BAX promoter activity increasing neuronal cell apoptosis. Negatively regulates BAX promoter activity in the absence of TP53. Acts as a transcriptional coactivator via its interaction with the transcription factor ESR1 by enhancing its effect on estrogen response element (ERE)-containing promoter. Antagonizes the transcriptional stimulatory activity of POU4F1 by preventing its binding to an octamer motif. Involved in TNFSF11-mediated terminal osteoclast differentiation. The chain is POU domain, class 4, transcription factor 2 from Rattus norvegicus (Rat).